A 197-amino-acid polypeptide reads, in one-letter code: Guanylyl cyclase-activating protein 2 (197 aa).

The N-myristoyl glycine moiety is linked to residue Gly2. EF-hand domains lie at 15 to 50 (DVAE…QDNQ), 51 to 86 (EAAD…VLRG), 87 to 122 (KLEH…IYNL), and 138 to 173 (SPEQ…DKWV). Residues Asp64, Asn66, Asp68, Thr70, Glu75, Asp100, Asp102, Asn104, Cys106, Glu111, Asp151, Asn153, Asp155, Gln157, and Glu162 each coordinate Ca(2+).

As to expression, low expression in retina.

Functionally, stimulates guanylyl cyclase 1 (GC1) and GC2 when free calcium ions concentration is low and inhibits guanylyl cyclases when free calcium ions concentration is elevated. This Ca(2+)-sensitive regulation of guanylyl cyclase (GC) is a key event in recovery of the dark state of rod photoreceptors following light exposure. The polypeptide is Guanylyl cyclase-activating protein 2 (GUCA1B) (Lithobates pipiens (Northern leopard frog)).